A 281-amino-acid chain; its full sequence is MQLIDGKSLAHKVQENVAKEVEELKQVKNIVPGLAVLLIGDDPASHAYVNMKAKACERVGFYSITHNMPDTISQDEIIATIEMMNANPRIDGILVQLPLPKHIDTNKILEVIDPKKDVDGFHAYNVGRLVTGLDSFVACTPLGVMKMFEEYEIDLEGKDVCVVGASNIVGKPMASLLLNANATVTITHIFTKDLKAHTSQADIVVVGVGVPGLIKEDMVKEGAIVIDIGINRIEDGSLVGDVDFKNVAPKCSYITPVPGGVGPMTIAMLLSNTLKSAKQRA.

NADP(+)-binding positions include 164–166 (GAS), Ile-189, and Ile-230.

Belongs to the tetrahydrofolate dehydrogenase/cyclohydrolase family. Homodimer.

It catalyses the reaction (6R)-5,10-methylene-5,6,7,8-tetrahydrofolate + NADP(+) = (6R)-5,10-methenyltetrahydrofolate + NADPH. It carries out the reaction (6R)-5,10-methenyltetrahydrofolate + H2O = (6R)-10-formyltetrahydrofolate + H(+). It participates in one-carbon metabolism; tetrahydrofolate interconversion. Functionally, catalyzes the oxidation of 5,10-methylenetetrahydrofolate to 5,10-methenyltetrahydrofolate and then the hydrolysis of 5,10-methenyltetrahydrofolate to 10-formyltetrahydrofolate. In Sulfurovum sp. (strain NBC37-1), this protein is Bifunctional protein FolD.